We begin with the raw amino-acid sequence, 238 residues long: Type III secretion protein hrcQa (238 aa).

The tract at residues 66–238 (DAEALLSLLG…SHEEHRHHEY (173 aa)) is hrcQa-C.

In terms of assembly, interacts with hrcQb.

Its subcellular location is the cell inner membrane. Functionally, component of the type III secretion system, which is required for effector protein delivery, parasitism, and pathogenicity. Probably participates in the formation of a C-ring-like assembly along with hrcQb. This chain is Type III secretion protein hrcQa (hrcQa), found in Pseudomonas savastanoi pv. phaseolicola (Pseudomonas syringae pv. phaseolicola).